The following is a 245-amino-acid chain: Octopine transport system permease protein OccM (245 aa).

A run of 5 helical transmembrane segments spans residues F12–V32, F57–G77, A96–M116, V163–I183, and A199–I219. Residues I19–F216 enclose the ABC transmembrane type-1 domain.

It belongs to the binding-protein-dependent transport system permease family. HisMQ subfamily.

It is found in the cell inner membrane. In terms of biological role, component of the octopine active transport system probably consisting of four subunits: Q, M, P and T. This is Octopine transport system permease protein OccM (occM) from Rhizobium meliloti (Ensifer meliloti).